A 441-amino-acid chain; its full sequence is Signal recognition particle 54 kDa protein (441 aa).

GTP contacts are provided by residues 103–110, 184–188, and 244–247; these read GVQGSGKT, DTAGR, and TKMD.

It belongs to the GTP-binding SRP family. SRP54 subfamily. In terms of assembly, part of the signal recognition particle protein translocation system, which is composed of SRP and FtsY. Archaeal SRP consists of a 7S RNA molecule of 300 nucleotides and two protein subunits: SRP54 and SRP19.

It localises to the cytoplasm. It carries out the reaction GTP + H2O = GDP + phosphate + H(+). Involved in targeting and insertion of nascent membrane proteins into the cytoplasmic membrane. Binds to the hydrophobic signal sequence of the ribosome-nascent chain (RNC) as it emerges from the ribosomes. The SRP-RNC complex is then targeted to the cytoplasmic membrane where it interacts with the SRP receptor FtsY. The chain is Signal recognition particle 54 kDa protein from Aeropyrum pernix (strain ATCC 700893 / DSM 11879 / JCM 9820 / NBRC 100138 / K1).